The primary structure comprises 144 residues: Deoxyuridine 5'-triphosphate nucleotidohydrolase (144 aa).

Positions 66, 79, 82, 85, 90, 134, 139, and 140 each coordinate dUMP.

This sequence belongs to the dUTPase family. Homotrimer. Mg(2+) is required as a cofactor.

The enzyme catalyses dUTP + H2O = dUMP + diphosphate + H(+). It participates in pyrimidine metabolism; dUMP biosynthesis; dUMP from dCTP (dUTP route): step 2/2. In terms of biological role, involved in nucleotide metabolism via production of dUMP, the immediate precursor of thymidine nucleotides, and decreases the intracellular concentration of dUTP so that uracil cannot be incorporated into DNA. The sequence is that of Deoxyuridine 5'-triphosphate nucleotidohydrolase (DUT1) from Candida glabrata (strain ATCC 2001 / BCRC 20586 / JCM 3761 / NBRC 0622 / NRRL Y-65 / CBS 138) (Yeast).